A 444-amino-acid polypeptide reads, in one-letter code: Enolase 2 (444 aa).

Positions 165 and 174 each coordinate substrate. E217 serves as the catalytic Proton donor. Residues D252, E303, and D330 each contribute to the Mg(2+) site. Substrate-binding residues include E303 and D330. K355 serves as the catalytic Proton acceptor. Residues 382–385 (SHRS) and K406 each bind substrate.

It belongs to the enolase family. As to quaternary structure, homodimer. Requires Mg(2+) as cofactor.

It localises to the cytoplasm. It catalyses the reaction (2R)-2-phosphoglycerate = phosphoenolpyruvate + H2O. It functions in the pathway carbohydrate degradation; glycolysis; pyruvate from D-glyceraldehyde 3-phosphate: step 4/5. The polypeptide is Enolase 2 (ENO2) (Toxoplasma gondii).